The primary structure comprises 172 residues: Translationally-controlled tumor protein (172 aa).

The TCTP domain maps to 1–172; sequence MIIYRDLISH…FKDGLEMEKC (172 aa). A phosphoserine mark is found at serine 46 and serine 53. Position 64 is a phosphoserine; by PLK1 (serine 64). Residues 70-172 form a required for reduction of TSC22D1 protein stability region; the sequence is VDIVMNHHLQ…FKDGLEMEKC (103 aa).

This sequence belongs to the TCTP family. In terms of assembly, homodimer. Interacts with STEAP3. Interacts with TSC22D1; interaction results in the destabilization of TSC22D1 protein.

It is found in the cytoplasm. In terms of biological role, involved in calcium binding and microtubule stabilization. Acts as a negative regulator of TSC22D1-mediated apoptosis, via interaction with and destabilization of TSC22D1 protein. The protein is Translationally-controlled tumor protein (Tpt1) of Mus musculus (Mouse).